A 63-amino-acid chain; its full sequence is Defensin-like protein 278 (63 aa).

The N-terminal stretch at 1-15 is a signal peptide; sequence MSLVYMYMYIGVVMS. Disulfide bonds link Cys-31–Cys-48, Cys-37–Cys-53, and Cys-41–Cys-55.

This sequence belongs to the DEFL family.

The protein localises to the secreted. This is Defensin-like protein 278 from Arabidopsis thaliana (Mouse-ear cress).